The chain runs to 116 residues: Large ribosomal subunit protein bL19 (116 aa).

This sequence belongs to the bacterial ribosomal protein bL19 family.

Its function is as follows. This protein is located at the 30S-50S ribosomal subunit interface and may play a role in the structure and function of the aminoacyl-tRNA binding site. The protein is Large ribosomal subunit protein bL19 of Pasteurella multocida (strain Pm70).